The chain runs to 306 residues: Ribonuclease Z (306 aa).

Zn(2+) is bound by residues H63, H65, D67, H68, H141, D211, and H269. The Proton acceptor role is filled by D67.

The protein belongs to the RNase Z family. As to quaternary structure, homodimer. Zn(2+) serves as cofactor.

It catalyses the reaction Endonucleolytic cleavage of RNA, removing extra 3' nucleotides from tRNA precursor, generating 3' termini of tRNAs. A 3'-hydroxy group is left at the tRNA terminus and a 5'-phosphoryl group is left at the trailer molecule.. Functionally, zinc phosphodiesterase, which displays some tRNA 3'-processing endonuclease activity. Probably involved in tRNA maturation, by removing a 3'-trailer from precursor tRNA. The protein is Ribonuclease Z of Staphylococcus carnosus (strain TM300).